Consider the following 64-residue polypeptide: uncharacterized protein (64 aa).

Over residues 1 to 14 the composition is skewed to polar residues; sequence MFNFDPTDQPTDQH. Residues 1–42 are disordered; that stretch reads MFNFDPTDQPTDQHLLQLPTDPHPLQQPIDPHPPPQPNNNLP.

This is an uncharacterized protein from Dictyostelium discoideum (Social amoeba).